The sequence spans 297 residues: Light-independent protochlorophyllide reductase iron-sulfur ATP-binding protein (297 aa).

Residues 41 to 46 and lysine 70 contribute to the ATP site; that span reads GIGKST. Serine 45 serves as a coordination point for Mg(2+). Cysteine 126 and cysteine 160 together coordinate [4Fe-4S] cluster. ATP is bound by residues 211-212 and 235-237; these read NR and PDL.

Belongs to the NifH/BchL/ChlL family. As to quaternary structure, homodimer. Protochlorophyllide reductase is composed of three subunits; BchL, BchN and BchB. [4Fe-4S] cluster is required as a cofactor.

The enzyme catalyses chlorophyllide a + oxidized 2[4Fe-4S]-[ferredoxin] + 2 ADP + 2 phosphate = protochlorophyllide a + reduced 2[4Fe-4S]-[ferredoxin] + 2 ATP + 2 H2O. The protein operates within porphyrin-containing compound metabolism; bacteriochlorophyll biosynthesis (light-independent). Its function is as follows. Component of the dark-operative protochlorophyllide reductase (DPOR) that uses Mg-ATP and reduced ferredoxin to reduce ring D of protochlorophyllide (Pchlide) to form chlorophyllide a (Chlide). This reaction is light-independent. The L component serves as a unique electron donor to the NB-component of the complex, and binds Mg-ATP. The polypeptide is Light-independent protochlorophyllide reductase iron-sulfur ATP-binding protein (Methylorubrum extorquens (strain CM4 / NCIMB 13688) (Methylobacterium extorquens)).